A 739-amino-acid polypeptide reads, in one-letter code: Probable beta-glucosidase L (739 aa).

A signal peptide spans 1 to 17 (MQTLFLSLLAAAVTVHA). N-linked (GlcNAc...) asparagine glycosylation is found at Asn40 and Asn224. Residue Asp252 is part of the active site. A glycan (N-linked (GlcNAc...) asparagine) is linked at Asn398.

This sequence belongs to the glycosyl hydrolase 3 family.

It localises to the secreted. The catalysed reaction is Hydrolysis of terminal, non-reducing beta-D-glucosyl residues with release of beta-D-glucose.. The protein operates within glycan metabolism; cellulose degradation. Its function is as follows. Beta-glucosidases are one of a number of cellulolytic enzymes involved in the degradation of cellulosic biomass. Catalyzes the last step releasing glucose from the inhibitory cellobiose. This is Probable beta-glucosidase L (bglL) from Aspergillus fumigatus (strain CBS 144.89 / FGSC A1163 / CEA10) (Neosartorya fumigata).